The primary structure comprises 81 residues: Control protein C.BamHI (81 aa).

In terms of domain architecture, HTH cro/C1-type spans valine 13 to leucine 68. A DNA-binding region (H-T-H motif) is located at residues glutamine 25–arginine 44.

May help modulate methylase (M) and restriction enzyme (R) expression as cells undergo physiological changes such as sporulation or transformation. In Bacillus amyloliquefaciens (Bacillus velezensis), this protein is Control protein C.BamHI.